A 233-amino-acid polypeptide reads, in one-letter code: Orotidine 5'-phosphate decarboxylase (233 aa).

Substrate is bound by residues aspartate 9, lysine 31, 58 to 67 (DLKLHDIPNT), threonine 120, arginine 182, glutamine 191, glycine 211, and arginine 212. The active-site Proton donor is the lysine 60.

Belongs to the OMP decarboxylase family. Type 1 subfamily. In terms of assembly, homodimer.

The enzyme catalyses orotidine 5'-phosphate + H(+) = UMP + CO2. The protein operates within pyrimidine metabolism; UMP biosynthesis via de novo pathway; UMP from orotate: step 2/2. Catalyzes the decarboxylation of orotidine 5'-monophosphate (OMP) to uridine 5'-monophosphate (UMP). In Listeria innocua serovar 6a (strain ATCC BAA-680 / CLIP 11262), this protein is Orotidine 5'-phosphate decarboxylase.